Reading from the N-terminus, the 59-residue chain is UPF0434 protein VV1_2087 (59 aa).

It belongs to the UPF0434 family.

The protein is UPF0434 protein VV1_2087 of Vibrio vulnificus (strain CMCP6).